A 403-amino-acid chain; its full sequence is SEC14-like protein 2 (403 aa).

Position 51 is an N6-succinyllysine (lysine 51). The CRAL-TRIO domain occupies 76–249 (PPEVIQQYLS…EYGGTMTDPD (174 aa)). 2 positions are modified to N6-succinyllysine: lysine 253 and lysine 257. The 109-residue stretch at 275–383 (KQQYEHSVQI…AKKVNFTVEV (109 aa)) folds into the GOLD domain. N6-succinyllysine is present on lysine 393.

Monomer. In terms of tissue distribution, widely expressed. Strong expression in liver, brain and prostate.

It localises to the cytoplasm. The protein resides in the nucleus. Its function is as follows. Carrier protein. Binds to some hydrophobic molecules and promotes their transfer between the different cellular sites. Binds with high affinity to alpha-tocopherol. Also binds with a weaker affinity to other tocopherols and to tocotrienols. May have a transcriptional activatory activity via its association with alpha-tocopherol. Probably recognizes and binds some squalene structure, suggesting that it may regulate cholesterol biosynthesis by increasing the transfer of squalene to a metabolic active pool in the cell. The polypeptide is SEC14-like protein 2 (SEC14L2) (Homo sapiens (Human)).